Here is a 132-residue protein sequence, read N- to C-terminus: Small ribosomal subunit protein uS8 (132 aa).

It belongs to the universal ribosomal protein uS8 family. As to quaternary structure, part of the 30S ribosomal subunit. Contacts proteins S5 and S12.

Its function is as follows. One of the primary rRNA binding proteins, it binds directly to 16S rRNA central domain where it helps coordinate assembly of the platform of the 30S subunit. This is Small ribosomal subunit protein uS8 from Clostridium perfringens (strain ATCC 13124 / DSM 756 / JCM 1290 / NCIMB 6125 / NCTC 8237 / Type A).